Reading from the N-terminus, the 238-residue chain is Fmr1 neighbor protein (238 aa).

A disordered region spans residues 1 to 30 (MPSDRRPSQRRNRSKSRDYRGARSKVTRAD). Residues 1–79 (MPSDRRPSQR…CLQYLWARRH (79 aa)) are Cytoplasmic-facing. Residues 15–30 (KSRDYRGARSKVTRAD) show a composition bias toward basic and acidic residues. The chain crosses the membrane as a helical span at residues 80 to 100 (LGLLLLLFWTLVILFRPVNTA). Over 101–178 (KLPILAEAAE…VRDKPTQVLR (78 aa)) the chain is Extracellular. Residues 118-176 (MLDFFFPTACIIRDNQVVVACNNQPYLSESECLKSKCCSSTSGTIIKCYAPVRDKPTQV) enclose the P-type domain. Residues 179 to 199 (VFGLAAISILVLGFLPMCCCS) traverse the membrane as a helical segment. Residues 200-238 (MCWRRKRMNRMLKVLKKQKSKGKKPKGRKASEERALLSH) are Cytoplasmic-facing. Over residues 214–227 (LKKQKSKGKKPKGR) the composition is skewed to basic residues. Residues 214-238 (LKKQKSKGKKPKGRKASEERALLSH) are disordered. Positions 228–238 (KASEERALLSH) are enriched in basic and acidic residues.

The protein resides in the membrane. This Mus musculus (Mouse) protein is Fmr1 neighbor protein.